A 1272-amino-acid chain; its full sequence is Magnesium-chelatase subunit H (1272 aa).

It belongs to the Mg-chelatase subunit H family.

The catalysed reaction is protoporphyrin IX + Mg(2+) + ATP + H2O = Mg-protoporphyrin IX + ADP + phosphate + 3 H(+). It functions in the pathway porphyrin-containing compound metabolism; bacteriochlorophyll biosynthesis (light-independent). Its function is as follows. Involved in bacteriochlorophyll pigment biosynthesis; introduces a magnesium ion into protoporphyrin IX to yield Mg-protoroporphyrin IX. This is Magnesium-chelatase subunit H (bchH) from Chlorobaculum parvum (strain DSM 263 / NCIMB 8327) (Chlorobium vibrioforme subsp. thiosulfatophilum).